A 536-amino-acid polypeptide reads, in one-letter code: Xylulose kinase (536 aa).

Substrate-binding residues include His99, Arg170, Asp280, and Asn281. Residues Trp355, 441-442, and Asn445 each bind ATP; that span reads GA.

This sequence belongs to the FGGY kinase family. Monomer.

It catalyses the reaction D-xylulose + ATP = D-xylulose 5-phosphate + ADP + H(+). Its function is as follows. Phosphorylates D-xylulose to produce D-xylulose 5-phosphate, a molecule that may play an important role in the regulation of glucose metabolism and lipogenesis. This Homo sapiens (Human) protein is Xylulose kinase (XYLB).